Reading from the N-terminus, the 143-residue chain is Beta/delta-urticatoxin-Uf2a (143 aa).

A signal peptide spans 1–18 (MGAIVLVALMALVASSSA). Residues 19–80 (FSDIEHNIMK…MMLSGRPQPN (62 aa)) constitute a propeptide that is removed on maturation. Disulfide bonds link Cys83–Cys100, Cys90–Cys105, Cys99–Cys113, Cys115–Cys129, Cys122–Cys134, and Cys128–Cys142.

It belongs to the urticatoxin-2 family. As to expression, expressed in trichomes, that are stiff epidermal hairs located on the surface of petioles and leaves.

It localises to the secreted. Its function is as follows. Plant defense neurotoxin that causes pain and systemic symptoms in mammals via modulation of voltage-gated sodium channels (Nav). Potent modulator of human Nav1.5/SCN5A (EC(50)=55 nM), Nav1.6/SCN8A (EC(50)=0.86 nM), and Nav1.7/SCN9A (EC(50)=208 nM), where it shifts the activation threshold to more negative potentials and delays fast inactivation. Also shifts the voltage-dependence of steady-state fast inactivation of Nav1.6/SCN8A, but not that of Nav1.5/SCN5A or Nav1.7/SCN9A. On Nav1.7/SCN9A, principally acts by binding to extracellular loops of domain IV (Nav site 3). Does not affect current response of the tetrodotoxin (TTX)-resistant Nav1.8/SCN10A sodium channel. In vivo, intraplantar injection into mice causes numerous dose-dependent, immediate, and long-lasting spontaneous pain behaviors, while no swelling is observed in the injected paw. At the highest doses tested, systemic symptoms including hypokinesia and hypersalivation are observed. The chain is Beta/delta-urticatoxin-Uf2a from Urtica ferox (Tree nettle).